We begin with the raw amino-acid sequence, 710 residues long: Tubulin polyglutamylase TTLL11 (710 aa).

The disordered stretch occupies residues 41 to 135 (VRVDAGAAGE…QRPVTVDSSK (95 aa)). The span at 51 to 60 (PECKAGEEQP) shows a compositional bias: basic and acidic residues. Over residues 64–82 (APAPAQPSAAEEGNTQVLQ) the composition is skewed to low complexity. Pro residues predominate over residues 83–93 (RPPPTLPPSKP). The span at 123-135 (NGSQRPVTVDSSK) shows a compositional bias: polar residues. Positions 128–480 (PVTVDSSKAR…EVKVAVIRDT (353 aa)) constitute a TTL domain. ATP contacts are provided by residues Lys-249, 255 to 256 (QG), 282 to 285 (QEYI), and 295 to 297 (KFD). Gln-255 is a binding site for a protein. Arg-321 is an L-glutamate binding site. 343-344 (TN) is an ATP binding site. L-glutamate is bound by residues Tyr-345, Ser-346, and Lys-365. Mg(2+) contacts are provided by Asp-428, Glu-441, and Asn-443. The tract at residues 467–538 (LVDEEVKVAV…SICLKQVFPK (72 aa)) is c-MTBD region. Lys-473 is a binding site for L-glutamate. Positions 665–710 (GVPSGGRPPHRGPPQEPSPSAQPAGDNPPPRTSCANKLSHPRHTLS) are disordered.

Belongs to the tubulin--tyrosine ligase family. The cofactor is Mg(2+).

It localises to the cytoplasm. Its subcellular location is the cytoskeleton. It is found in the cilium basal body. The catalysed reaction is L-glutamyl-[protein] + L-glutamate + ATP = gamma-L-glutamyl-L-glutamyl-[protein] + ADP + phosphate + H(+). It catalyses the reaction (L-glutamyl)(n)-gamma-L-glutamyl-L-glutamyl-[protein] + L-glutamate + ATP = (L-glutamyl)(n+1)-gamma-L-glutamyl-L-glutamyl-[protein] + ADP + phosphate + H(+). In terms of biological role, polyglutamylase which modifies tubulin, generating polyglutamate side chains of variable lengths on the gamma-carboxyl group of specific glutamate residues within the C-terminal tail of tubulin. Preferentially mediates ATP-dependent polyglutamate long side-chain elongation over the initiation step of the polyglutamylation reaction. Preferentially modifies the alpha-tubulin tail over a beta-tail. Required for CCSAP localization to both spindle and cilia microtubules. Promotes tubulin polyglutamylation which stimulates spastin/SPAST-mediated microtubule severing, thereby regulating microtubule functions. The protein is Tubulin polyglutamylase TTLL11 of Homo sapiens (Human).